The primary structure comprises 623 residues: Translation initiation factor IF-2 (623 aa).

Residues 1 to 18 are compositionally biased toward low complexity; that stretch reads MTLNKKTNNENSSKTTPK. 2 disordered regions span residues 1–21 and 92–115; these read MTLN…KLSK and PQKE…KLQA. The 169-residue stretch at 125–293 folds into the tr-type G domain; that stretch reads KTPPIVTIMG…ILLFSEIQNL (169 aa). Residues 134-141 form a G1 region; that stretch reads GHVDHGKT. Residue 134-141 participates in GTP binding; it reads GHVDHGKT. The G2 stretch occupies residues 159 to 163; the sequence is GITQH. The segment at 180–183 is G3; the sequence is DTPG. Residues 180 to 184 and 234 to 237 contribute to the GTP site; these read DTPGH and NKVD. Residues 234 to 237 are G4; the sequence is NKVD. The tract at residues 270-272 is G5; sequence SAL.

This sequence belongs to the TRAFAC class translation factor GTPase superfamily. Classic translation factor GTPase family. IF-2 subfamily.

The protein resides in the cytoplasm. In terms of biological role, one of the essential components for the initiation of protein synthesis. Protects formylmethionyl-tRNA from spontaneous hydrolysis and promotes its binding to the 30S ribosomal subunits. Also involved in the hydrolysis of GTP during the formation of the 70S ribosomal complex. This chain is Translation initiation factor IF-2, found in Aster yellows witches'-broom phytoplasma (strain AYWB).